Here is a 361-residue protein sequence, read N- to C-terminus: MLYWLTQLLQGQYHAFRVFQYLTFRSILASLTALIVGLLCGPLMIRWLRGLQIGQMVRSDGPQTHLSKAGTPTMGGVLILLAITVSCLLWCDLRQTSLWLVLLVTLANGLVGWVDDYRKLVLKNSKGLPGRWKYFWQSVIALVAVSYLYWNASLPVHTQLTAPFFKTVTWDLGIFFPVLAYFVIVGSSNAVNLTDGLDGLAIMPIVMVAGALGVFAYASSNAVYSNYLGIPYVPNTGELTIFCSSIVGAGLGFLWYNSYPAQVFMGDVGSLALGAALGIVAVVVRQELVLLIMGGLFVIETLSVILQVGYFKYSGGKRLFRMAPLHHHFELKGWSEPKVIVRFWIITVVFVLCGLATLKLR.

10 consecutive transmembrane segments (helical) span residues 27 to 47 (ILAS…MIRW), 70 to 90 (GTPT…CLLW), 97 to 117 (SLWL…VDDY), 134 to 154 (YFWQ…NASL), 167 to 187 (TVTW…IVGS), 199 to 219 (GLAI…AYAS), 236 to 256 (TGEL…FLWY), 263 to 283 (VFMG…VAVV), 288 to 308 (LVLL…ILQV), and 338 to 358 (KVIV…LATL).

The protein belongs to the glycosyltransferase 4 family. MraY subfamily. It depends on Mg(2+) as a cofactor.

The protein localises to the cell inner membrane. The enzyme catalyses UDP-N-acetyl-alpha-D-muramoyl-L-alanyl-gamma-D-glutamyl-meso-2,6-diaminopimeloyl-D-alanyl-D-alanine + di-trans,octa-cis-undecaprenyl phosphate = di-trans,octa-cis-undecaprenyl diphospho-N-acetyl-alpha-D-muramoyl-L-alanyl-D-glutamyl-meso-2,6-diaminopimeloyl-D-alanyl-D-alanine + UMP. It participates in cell wall biogenesis; peptidoglycan biosynthesis. In terms of biological role, catalyzes the initial step of the lipid cycle reactions in the biosynthesis of the cell wall peptidoglycan: transfers peptidoglycan precursor phospho-MurNAc-pentapeptide from UDP-MurNAc-pentapeptide onto the lipid carrier undecaprenyl phosphate, yielding undecaprenyl-pyrophosphoryl-MurNAc-pentapeptide, known as lipid I. The sequence is that of Phospho-N-acetylmuramoyl-pentapeptide-transferase from Legionella pneumophila (strain Lens).